Reading from the N-terminus, the 215-residue chain is UPF0502 protein YceH (215 aa).

N6-acetyllysine is present on K80.

This sequence belongs to the UPF0502 family.

The protein is UPF0502 protein YceH of Shigella boydii serotype 4 (strain Sb227).